The sequence spans 237 residues: MDTLKDQFVVPGDVIGKIGDLKVRIGPGLLQTKDTVLATKAGVLRYSKFHRFYWIENEQKRYVPQVEDMVIGTIIEKHAESFKVDIGSSCSALLSAYSFEGATKSNKPLLNVGNLIYCRVTVANRDMEPEVVCLSQKQKAEGFGQLIGGYMLNCSLGLSHYLLSEDCFLLQILGKHIPYEIAVGVNGRVWINSGSNHNTIVVSNTIYNSQYIQDDQIEPFILKSLSINETSGLVEQN.

Positions 67-137 (EDMVIGTIIE…EPEVVCLSQK (71 aa)) constitute an S1 motif domain.

This sequence belongs to the RRP40 family. In terms of assembly, component of the RNA exosome complex.

The protein resides in the cytoplasm. It localises to the nucleus. Its subcellular location is the nucleolus. Non-catalytic component of the RNA exosome complex which has 3'-&gt;5' exoribonuclease activity and participates in a multitude of cellular RNA processing and degradation events. The chain is Putative exosome complex component rrp40 (exosc3) from Dictyostelium discoideum (Social amoeba).